The chain runs to 142 residues: MKQGKFSVFLILLLMLTLVVAPKEKAEAASSGWQPVSGISGCKIRVITDAYTYTKSATSIDAYAETNGKCGKLNYKSFGVSIVEGGDIGPQYSGYFSSRTPTKKFYFSKLPKPTGTPWAVGLSVYKGKAKGAAFVYINPQKR.

Positions Met-1 to Ala-28 are cleaved as a signal peptide.

As to quaternary structure, found in a complex with F(1)F(0) ATP synthase and SpoIIIJ and YqjG.

It is found in the secreted. The protein resides in the cell wall. This is Cell wall-binding protein YqgA (yqgA) from Bacillus subtilis (strain 168).